We begin with the raw amino-acid sequence, 264 residues long: 3-methyl-2-oxobutanoate hydroxymethyltransferase (264 aa).

Positions 45 and 84 each coordinate Mg(2+). 3-methyl-2-oxobutanoate is bound by residues 45–46 (DS), D84, and K112. Residue E114 participates in Mg(2+) binding. E181 acts as the Proton acceptor in catalysis.

It belongs to the PanB family. Homodecamer; pentamer of dimers. Mg(2+) serves as cofactor.

The protein localises to the cytoplasm. It carries out the reaction 3-methyl-2-oxobutanoate + (6R)-5,10-methylene-5,6,7,8-tetrahydrofolate + H2O = 2-dehydropantoate + (6S)-5,6,7,8-tetrahydrofolate. Its pathway is cofactor biosynthesis; (R)-pantothenate biosynthesis; (R)-pantoate from 3-methyl-2-oxobutanoate: step 1/2. In terms of biological role, catalyzes the reversible reaction in which hydroxymethyl group from 5,10-methylenetetrahydrofolate is transferred onto alpha-ketoisovalerate to form ketopantoate. This is 3-methyl-2-oxobutanoate hydroxymethyltransferase from Shigella boydii serotype 18 (strain CDC 3083-94 / BS512).